Here is a 408-residue protein sequence, read N- to C-terminus: Peptidase T (408 aa).

Residue His-78 coordinates Zn(2+). The active site involves Asp-80. Asp-140 provides a ligand contact to Zn(2+). Catalysis depends on Glu-173, which acts as the Proton acceptor. Zn(2+) is bound by residues Glu-174, Asp-196, and His-379.

This sequence belongs to the peptidase M20B family. It depends on Zn(2+) as a cofactor.

It is found in the cytoplasm. The enzyme catalyses Release of the N-terminal residue from a tripeptide.. Cleaves the N-terminal amino acid of tripeptides. This is Peptidase T from Salmonella arizonae (strain ATCC BAA-731 / CDC346-86 / RSK2980).